A 189-amino-acid polypeptide reads, in one-letter code: ATP synthase subunit b (189 aa).

The helical transmembrane segment at 38 to 58 (PMFLATLIAFILVVLILWFLL) threads the bilayer.

Belongs to the ATPase B chain family. F-type ATPases have 2 components, F(1) - the catalytic core - and F(0) - the membrane proton channel. F(1) has five subunits: alpha(3), beta(3), gamma(1), delta(1), epsilon(1). F(0) has three main subunits: a(1), b(2) and c(10-14). The alpha and beta chains form an alternating ring which encloses part of the gamma chain. F(1) is attached to F(0) by a central stalk formed by the gamma and epsilon chains, while a peripheral stalk is formed by the delta and b chains.

The protein resides in the cell membrane. F(1)F(0) ATP synthase produces ATP from ADP in the presence of a proton or sodium gradient. F-type ATPases consist of two structural domains, F(1) containing the extramembraneous catalytic core and F(0) containing the membrane proton channel, linked together by a central stalk and a peripheral stalk. During catalysis, ATP synthesis in the catalytic domain of F(1) is coupled via a rotary mechanism of the central stalk subunits to proton translocation. Its function is as follows. Component of the F(0) channel, it forms part of the peripheral stalk, linking F(1) to F(0). In Mycoplasmopsis agalactiae (strain NCTC 10123 / CIP 59.7 / PG2) (Mycoplasma agalactiae), this protein is ATP synthase subunit b.